Reading from the N-terminus, the 338-residue chain is Holliday junction branch migration complex subunit RuvB (338 aa).

Positions 4–185 (EDQKILDAKP…FGIVAHMQFY (182 aa)) are large ATPase domain (RuvB-L). ATP contacts are provided by residues Leu-24, Arg-25, Gly-66, Lys-69, Thr-70, Thr-71, 132–134 (EDF), Arg-175, Tyr-185, and Arg-222. Thr-70 serves as a coordination point for Mg(2+). Positions 186-256 (PVSDLKLIAK…IVDNALNKLH (71 aa)) are small ATPAse domain (RuvB-S). The tract at residues 259–338 (ARGLDETDLK…LQIPYQTGLS (80 aa)) is head domain (RuvB-H). Positions 314 and 319 each coordinate DNA.

The protein belongs to the RuvB family. Homohexamer. Forms an RuvA(8)-RuvB(12)-Holliday junction (HJ) complex. HJ DNA is sandwiched between 2 RuvA tetramers; dsDNA enters through RuvA and exits via RuvB. An RuvB hexamer assembles on each DNA strand where it exits the tetramer. Each RuvB hexamer is contacted by two RuvA subunits (via domain III) on 2 adjacent RuvB subunits; this complex drives branch migration. In the full resolvosome a probable DNA-RuvA(4)-RuvB(12)-RuvC(2) complex forms which resolves the HJ.

The protein resides in the cytoplasm. It catalyses the reaction ATP + H2O = ADP + phosphate + H(+). Functionally, the RuvA-RuvB-RuvC complex processes Holliday junction (HJ) DNA during genetic recombination and DNA repair, while the RuvA-RuvB complex plays an important role in the rescue of blocked DNA replication forks via replication fork reversal (RFR). RuvA specifically binds to HJ cruciform DNA, conferring on it an open structure. The RuvB hexamer acts as an ATP-dependent pump, pulling dsDNA into and through the RuvAB complex. RuvB forms 2 homohexamers on either side of HJ DNA bound by 1 or 2 RuvA tetramers; 4 subunits per hexamer contact DNA at a time. Coordinated motions by a converter formed by DNA-disengaged RuvB subunits stimulates ATP hydrolysis and nucleotide exchange. Immobilization of the converter enables RuvB to convert the ATP-contained energy into a lever motion, pulling 2 nucleotides of DNA out of the RuvA tetramer per ATP hydrolyzed, thus driving DNA branch migration. The RuvB motors rotate together with the DNA substrate, which together with the progressing nucleotide cycle form the mechanistic basis for DNA recombination by continuous HJ branch migration. Branch migration allows RuvC to scan DNA until it finds its consensus sequence, where it cleaves and resolves cruciform DNA. This chain is Holliday junction branch migration complex subunit RuvB, found in Oenococcus oeni (strain ATCC BAA-331 / PSU-1).